Consider the following 118-residue polypeptide: NADH-ubiquinone oxidoreductase chain 3 (118 aa).

The next 2 membrane-spanning stretches (helical) occupy residues 4–24 (FAPICIYLVISLLVSLIPLGV) and 87–107 (IDPFGSWSMMAFLLILTIGSL).

It belongs to the complex I subunit 3 family.

The protein resides in the mitochondrion membrane. The enzyme catalyses a ubiquinone + NADH + 5 H(+)(in) = a ubiquinol + NAD(+) + 4 H(+)(out). Its function is as follows. Core subunit of the mitochondrial membrane respiratory chain NADH dehydrogenase (Complex I) that is believed to belong to the minimal assembly required for catalysis. Complex I functions in the transfer of electrons from NADH to the respiratory chain. The immediate electron acceptor for the enzyme is believed to be ubiquinone. This chain is NADH-ubiquinone oxidoreductase chain 3 (ND3), found in Panax ginseng (Korean ginseng).